Consider the following 505-residue polypeptide: Protein nucleotidyltransferase YdiU (505 aa).

ATP contacts are provided by Gly-102, Gly-104, Arg-105, Lys-125, Asp-137, Gly-138, Arg-188, and Arg-195. Asp-264 (proton acceptor) is an active-site residue. Residues Asn-265 and Asp-274 each contribute to the Mg(2+) site. Asp-274 serves as a coordination point for ATP.

Belongs to the SELO family. The cofactor is Mg(2+). Mn(2+) is required as a cofactor.

The enzyme catalyses L-seryl-[protein] + ATP = 3-O-(5'-adenylyl)-L-seryl-[protein] + diphosphate. The catalysed reaction is L-threonyl-[protein] + ATP = 3-O-(5'-adenylyl)-L-threonyl-[protein] + diphosphate. It catalyses the reaction L-tyrosyl-[protein] + ATP = O-(5'-adenylyl)-L-tyrosyl-[protein] + diphosphate. It carries out the reaction L-histidyl-[protein] + UTP = N(tele)-(5'-uridylyl)-L-histidyl-[protein] + diphosphate. The enzyme catalyses L-seryl-[protein] + UTP = O-(5'-uridylyl)-L-seryl-[protein] + diphosphate. The catalysed reaction is L-tyrosyl-[protein] + UTP = O-(5'-uridylyl)-L-tyrosyl-[protein] + diphosphate. In terms of biological role, nucleotidyltransferase involved in the post-translational modification of proteins. It can catalyze the addition of adenosine monophosphate (AMP) or uridine monophosphate (UMP) to a protein, resulting in modifications known as AMPylation and UMPylation. The chain is Protein nucleotidyltransferase YdiU from Nitrobacter winogradskyi (strain ATCC 25391 / DSM 10237 / CIP 104748 / NCIMB 11846 / Nb-255).